A 251-amino-acid chain; its full sequence is Pyrroline-5-carboxylate reductase (251 aa).

The protein belongs to the pyrroline-5-carboxylate reductase family.

The protein resides in the cytoplasm. It carries out the reaction L-proline + NADP(+) = (S)-1-pyrroline-5-carboxylate + NADPH + 2 H(+). The enzyme catalyses L-proline + NAD(+) = (S)-1-pyrroline-5-carboxylate + NADH + 2 H(+). It functions in the pathway amino-acid biosynthesis; L-proline biosynthesis; L-proline from L-glutamate 5-semialdehyde: step 1/1. Functionally, catalyzes the reduction of 1-pyrroline-5-carboxylate (PCA) to L-proline. This chain is Pyrroline-5-carboxylate reductase (proC), found in Methanobrevibacter smithii.